The chain runs to 110 residues: Small ribosomal subunit protein bS16 (110 aa).

The disordered stretch occupies residues 87 to 110 (ARQNPIKAVPRKERKAQAEAAAKG).

It belongs to the bacterial ribosomal protein bS16 family.

The chain is Small ribosomal subunit protein bS16 from Bradyrhizobium sp. (strain BTAi1 / ATCC BAA-1182).